The chain runs to 156 residues: ATP synthase subunit b (156 aa).

A helical membrane pass occupies residues Ala11–Ala31.

Belongs to the ATPase B chain family. In terms of assembly, F-type ATPases have 2 components, F(1) - the catalytic core - and F(0) - the membrane proton channel. F(1) has five subunits: alpha(3), beta(3), gamma(1), delta(1), epsilon(1). F(0) has three main subunits: a(1), b(2) and c(10-14). The alpha and beta chains form an alternating ring which encloses part of the gamma chain. F(1) is attached to F(0) by a central stalk formed by the gamma and epsilon chains, while a peripheral stalk is formed by the delta and b chains.

Its subcellular location is the cell inner membrane. F(1)F(0) ATP synthase produces ATP from ADP in the presence of a proton or sodium gradient. F-type ATPases consist of two structural domains, F(1) containing the extramembraneous catalytic core and F(0) containing the membrane proton channel, linked together by a central stalk and a peripheral stalk. During catalysis, ATP synthesis in the catalytic domain of F(1) is coupled via a rotary mechanism of the central stalk subunits to proton translocation. Its function is as follows. Component of the F(0) channel, it forms part of the peripheral stalk, linking F(1) to F(0). In Yersinia pseudotuberculosis serotype O:1b (strain IP 31758), this protein is ATP synthase subunit b.